We begin with the raw amino-acid sequence, 662 residues long: MALITLRKNLYRLSDFQMHRALAALKNKPLNHVHKVVKERLCPWLCSRQPEPFGVKFHHAHCKKFHSKNGNDLHPLGGPVFSQVSDCDRLEQNVKNEESQMFYRRLSNLTSSEEVLSFISTMETLPDTMAAGALQRICEVEKKDGDQGLPKEILENSIFQALCFQFEKEPSQLSNTSLVTALQALILLHVDPQSSLLLNLVAECQNRLRKGGMEVRNLCILGESLITLHSSGCVTLELIINQLQGEKLETFTPEDIVALYRILQACTEKVDEHQTFLNKINNFSLSIVSNLSPKLISQMLTALVVLDQSQAFPLIIKLGKYVVRHVPHFTNEELRRVLEAFIYFGHHDTFFTKALEHRVAAVCLTLDPEVVCRVMEYCSRELILSKPILNAVAETFVCQTEKFSPRQISALMEPFGKLNYLPPNASALFRKLENVLFTHFNYFPPKSLLKLLHSCSLNECHPVNFLAKIFKPLFLQRLQGKESHLDTLSRAQLTQLFLASVLECPFYKGPKLLPKYQVKSFLTPCCSLETPVDSQLYRYVKIGLTNLLGARLYFAPKVLTPYCYTIDVEIKLDEEGFVLPSTANEDIHKRIALCIDGPKRFCSNSKHLLGKEAIKQRHLQLLGYQVVQIPYHEIGMLKSRRELVEYLQRKLFSQNTVHWLQE.

Residues 591 to 649 form the RAP domain; it reads IALCIDGPKRFCSNSKHLLGKEAIKQRHLQLLGYQVVQIPYHEIGMLKSRRELVEYLQR.

It belongs to the FAST kinase family. Expression detected in spleen, thymus, testis, ovary, colon, heart, smooth muscle, kidney, brain, lung, liver and white adipose tissue with highest expression in liver and thyroid.

It is found in the mitochondrion. In terms of biological role, required for normal mitochondrial respiration. Increases steady-state levels and half-lives of a subset of mature mitochondrial mRNAs MT-ND2, MT-ND3, MT-CYTB, MT-CO2, and MT-ATP8/6. Promotes MT-CO1 mRNA translation and increases mitochondrial complex IV assembly and activity. The polypeptide is FAST kinase domain-containing protein 3, mitochondrial (FASTKD3) (Homo sapiens (Human)).